The chain runs to 476 residues: Probable cytosolic Fe-S cluster assembly factor GI11683 (476 aa).

The [4Fe-4S] cluster site is built by Cys23, Cys68, Cys71, Cys74, Cys187, Cys243, Cys395, and Cys399.

The protein belongs to the NARF family.

Component of the cytosolic iron-sulfur (Fe/S) protein assembly machinery. Required for maturation of extramitochondrial Fe/S proteins. The polypeptide is Probable cytosolic Fe-S cluster assembly factor GI11683 (Drosophila mojavensis (Fruit fly)).